Consider the following 216-residue polypeptide: Gamma-glutamylcyclotransferase 2-1 (216 aa).

A substrate-binding site is contributed by 5–10 (VFGYGS). Glu-87 (proton acceptor) is an active-site residue.

This sequence belongs to the gamma-glutamylcyclotransferase family. Mn(2+) is required as a cofactor. As to expression, expressed in the central vascular bundle of roots, leaf veins, hydathodes, cauline leaves, shoot apex, sepal veins, flower receptacles and developing seeds.

The protein localises to the cytoplasm. It catalyses the reaction an alpha-(gamma-L-glutamyl)-L-amino acid = 5-oxo-L-proline + an L-alpha-amino acid. In terms of biological role, catalyzes the formation of 5-oxoproline from gamma-glutamyl dipeptides and plays a significant role in glutathione (GSH) homeostasis. Converts both GSH and gamma-glutamyl-L-alanine to 5-oxoproline in vitro. Plays a role in detoxification of heavy metals and metalloids by recycling glutamate and maintaining GSH homeostasis. This chain is Gamma-glutamylcyclotransferase 2-1, found in Arabidopsis thaliana (Mouse-ear cress).